The sequence spans 184 residues: Large ribosomal subunit protein uL5c (184 aa).

Belongs to the universal ribosomal protein uL5 family. As to quaternary structure, part of the 50S ribosomal subunit; contacts the 5S rRNA.

It is found in the plastid. The protein localises to the chloroplast. Its function is as follows. Binds 5S rRNA, forms part of the central protuberance of the 50S subunit. This Nephroselmis olivacea (Green alga) protein is Large ribosomal subunit protein uL5c (rpl5).